The chain runs to 793 residues: ABC transporter G family member 1 (793 aa).

Residues M1–S20 are compositionally biased toward low complexity. A disordered region spans residues M1–N96. The segment covering S21–E37 has biased composition (basic and acidic residues). A compositionally biased stretch (polar residues) spans E59–D68. Residues L67 to N102 adopt a coiled-coil conformation. Residues N69–N96 show a composition bias toward low complexity. Residues V123–E364 enclose the ABC transporter domain. G156–T163 lines the ATP pocket. Acidic residues predominate over residues D382–I398. Residues D382–R457 are disordered. A compositionally biased stretch (gly residues) spans G399–E413. Polar residues predominate over residues P421 to K437. Residues Q438–Q448 show a composition bias toward low complexity. The 259-residue stretch at M527–K785 folds into the ABC transmembrane type-2 domain. 7 consecutive transmembrane segments (helical) span residues L533–G553, V563–F583, F610–M630, F647–S667, V674–I694, G701–I721, and V764–L784.

This sequence belongs to the ABC transporter superfamily. ABCG family.

The protein localises to the membrane. This chain is ABC transporter G family member 1 (abcG1), found in Dictyostelium discoideum (Social amoeba).